We begin with the raw amino-acid sequence, 722 residues long: Metal transporter cnnm-5 (722 aa).

Positions 1 to 17 (MSLFLFAIFQLALGSPG) are cleaved as a signal peptide. Topologically, residues 18-139 (APNGPNVPLQ…AAAAKYMGDE (122 aa)) are extracellular. Asn-102 and Asn-114 each carry an N-linked (GlcNAc...) asparagine glycan. The CNNM transmembrane domain occupies 132–318 (AAKYMGDEIV…AQNEREKTIL (187 aa)). The chain crosses the membrane as a helical span at residues 140-160 (IVFCFFCILMSAYASGMTLGY). Topologically, residues 161 to 196 (MKFSMIDLNTMLKIAEGDAAKKRVRRIMHFRRRSTQ) are cytoplasmic. The helical transmembrane segment at 197-217 (LVVTFSLFSSVFTVLFTTTCE) threads the bilayer. At 218–227 (KMLHGVSNED) the chain is on the extracellular side. The helical transmembrane segment at 228-248 (VLKMAVPALICLIFAEMIPQA) threads the bilayer. Topologically, residues 249–257 (VCNSKFGFN) are cytoplasmic. A helical membrane pass occupies residues 258 to 278 (LAASLWFVTVIIFFVTLPIAY). The Extracellular segment spans residues 279–722 (PASLVLGRFL…ETTPFMEKQE (444 aa)). 3 N-linked (GlcNAc...) asparagine glycosylation sites follow: Asn-320, Asn-349, and Asn-371. CBS domains are found at residues 333–396 (MVPI…LIDE) and 413–473 (TVKF…KIDE). The segment at 584–607 (SQRSSSTVNSQQHRQQTTDNSRST) is disordered. Asn-639 carries N-linked (GlcNAc...) asparagine glycosylation. Positions 686–722 (LNSRASTSTSTTPACRTPLSVDARSQDETTPFMEKQE) are disordered. Residues 688 to 703 (SRASTSTSTTPACRTP) show a composition bias toward low complexity.

Belongs to the ACDP family.

The protein resides in the cell membrane. Probable metal transporter. Probably acts redundantly with the other metal transport proteins cnnm-1, cnnm-2, cnnm-3 and cnnm-4 to regulate Mg(2+) homeostasis. The sequence is that of Metal transporter cnnm-5 from Caenorhabditis elegans.